The following is a 368-amino-acid chain: Peptide chain release factor 2 (368 aa).

Residue Gln-250 is modified to N5-methylglutamine.

This sequence belongs to the prokaryotic/mitochondrial release factor family. In terms of processing, methylated by PrmC. Methylation increases the termination efficiency of RF2.

The protein resides in the cytoplasm. Its function is as follows. Peptide chain release factor 2 directs the termination of translation in response to the peptide chain termination codons UGA and UAA. This is Peptide chain release factor 2 from Mycolicibacterium vanbaalenii (strain DSM 7251 / JCM 13017 / BCRC 16820 / KCTC 9966 / NRRL B-24157 / PYR-1) (Mycobacterium vanbaalenii).